The sequence spans 312 residues: 4-diphosphocytidyl-2-C-methyl-D-erythritol kinase (312 aa).

Lysine 16 is an active-site residue. Position 101–111 (101–111) interacts with ATP; sequence PIGAGLAGGSS. Aspartate 143 is an active-site residue.

Belongs to the GHMP kinase family. IspE subfamily.

It carries out the reaction 4-CDP-2-C-methyl-D-erythritol + ATP = 4-CDP-2-C-methyl-D-erythritol 2-phosphate + ADP + H(+). It functions in the pathway isoprenoid biosynthesis; isopentenyl diphosphate biosynthesis via DXP pathway; isopentenyl diphosphate from 1-deoxy-D-xylulose 5-phosphate: step 3/6. In terms of biological role, catalyzes the phosphorylation of the position 2 hydroxy group of 4-diphosphocytidyl-2C-methyl-D-erythritol. This is 4-diphosphocytidyl-2-C-methyl-D-erythritol kinase from Prochlorococcus marinus (strain MIT 9515).